The chain runs to 242 residues: Tropomyosin-1 (242 aa).

2 disordered regions span residues 1–31 (MDAI…ELTA) and 65–96 (TSLT…QTDY). Positions 1 to 242 (MDAIKKKMSA…DELLLELASM (242 aa)) form a coiled coil. Basic and acidic residues-rich tracts occupy residues 13–23 (TKLEEADKQAQ) and 70–96 (KYNE…QTDY).

It belongs to the tropomyosin family. In terms of assembly, homodimer. As to expression, expressed ubiquitously.

This is Tropomyosin-1 (TPM1) from Podocoryna carnea (Hydrozoan).